The chain runs to 296 residues: Bifunctional protein FolD (296 aa).

Residues Gly-166–Ser-168, Ser-191, and Ile-232 each bind NADP(+).

Belongs to the tetrahydrofolate dehydrogenase/cyclohydrolase family. In terms of assembly, homodimer.

It catalyses the reaction (6R)-5,10-methylene-5,6,7,8-tetrahydrofolate + NADP(+) = (6R)-5,10-methenyltetrahydrofolate + NADPH. The catalysed reaction is (6R)-5,10-methenyltetrahydrofolate + H2O = (6R)-10-formyltetrahydrofolate + H(+). The protein operates within one-carbon metabolism; tetrahydrofolate interconversion. Functionally, catalyzes the oxidation of 5,10-methylenetetrahydrofolate to 5,10-methenyltetrahydrofolate and then the hydrolysis of 5,10-methenyltetrahydrofolate to 10-formyltetrahydrofolate. The sequence is that of Bifunctional protein FolD from Cereibacter sphaeroides (strain ATCC 17023 / DSM 158 / JCM 6121 / CCUG 31486 / LMG 2827 / NBRC 12203 / NCIMB 8253 / ATH 2.4.1.) (Rhodobacter sphaeroides).